A 235-amino-acid chain; its full sequence is Putative quercetin 2,3-dioxygenase ZMO1337 (235 aa).

4 residues coordinate a divalent metal cation: H57, H59, H101, and E103.

Belongs to the pirin family. Requires a divalent metal cation as cofactor.

The enzyme catalyses quercetin + O2 = 2-(3,4-dihydroxybenzoyloxy)-4,6-dihydroxybenzoate + CO. It participates in flavonoid metabolism; quercetin degradation. Functionally, putative quercetin 2,3-dioxygenase. In Zymomonas mobilis subsp. mobilis (strain ATCC 31821 / ZM4 / CP4), this protein is Putative quercetin 2,3-dioxygenase ZMO1337.